The chain runs to 262 residues: Transmembrane protein 270 (262 aa).

Transmembrane regions (helical) follow at residues 6-26 (LVRS…ALLI), 30-50 (AHLY…LLGL), 67-87 (PVGR…CLAL), 92-112 (LVWA…KWLG), and 127-147 (LFLS…LLVW). Residues 226 to 262 (QEAEPQKALGLSSETPPPGPPAPGARPVLPEPGTPGE) form a disordered region. Residues 240 to 262 (TPPPGPPAPGARPVLPEPGTPGE) are compositionally biased toward pro residues.

It localises to the membrane. The sequence is that of Transmembrane protein 270 from Bos taurus (Bovine).